The primary structure comprises 472 residues: ATP synthase subunit beta (472 aa).

155-162 lines the ATP pocket; it reads GGAGVGKT.

The protein belongs to the ATPase alpha/beta chains family. As to quaternary structure, F-type ATPases have 2 components, CF(1) - the catalytic core - and CF(0) - the membrane proton channel. CF(1) has five subunits: alpha(3), beta(3), gamma(1), delta(1), epsilon(1). CF(0) has three main subunits: a(1), b(2) and c(9-12). The alpha and beta chains form an alternating ring which encloses part of the gamma chain. CF(1) is attached to CF(0) by a central stalk formed by the gamma and epsilon chains, while a peripheral stalk is formed by the delta and b chains.

The protein resides in the cell inner membrane. It carries out the reaction ATP + H2O + 4 H(+)(in) = ADP + phosphate + 5 H(+)(out). Functionally, produces ATP from ADP in the presence of a proton gradient across the membrane. The catalytic sites are hosted primarily by the beta subunits. In Fervidobacterium nodosum (strain ATCC 35602 / DSM 5306 / Rt17-B1), this protein is ATP synthase subunit beta.